We begin with the raw amino-acid sequence, 145 residues long: Protein SprT-like (145 aa).

In terms of domain architecture, SprT-like spans 5-141; the sequence is NYVKQVSVED…CGRCMGKLRL (137 aa). His64 contributes to the Zn(2+) binding site. Glu65 is an active-site residue. His68 contributes to the Zn(2+) binding site.

Belongs to the SprT family. Zn(2+) serves as cofactor.

It localises to the cytoplasm. This Streptococcus sanguinis (strain SK36) protein is Protein SprT-like.